We begin with the raw amino-acid sequence, 264 residues long: Apolipoprotein A-I (264 aa).

The N-terminal stretch at 1 to 18 (MKAVVLAVAVLFLTGSQA) is a signal peptide. 2 repeat units span residues 67–88 (LKLL…ADLG) and 89–110 (PVTQ…QEMN). Positions 67–264 (LKLLDNWDTL…DQATKQLTAQ (198 aa)) are 10 X approximate tandem repeats. Position 109 is a methionine sulfoxide (M109). The 3; half-length repeat unit spans residues 111–121 (KDLQEVKQKVQ). 5 repeat units span residues 122–143 (PYLD…EKVG), 144–165 (PLGT…EKLT), 166–187 (PLGE…TQLA), 188–207 (PYSD…LRDS), and 208–229 (TTFA…EKAK). Residues 230 to 240 (PALEDLRQGLL) form a 9; half-length repeat. Copy 10 of the repeat occupies 241–264 (PVLESLKASILSSIDQATKQLTAQ).

Belongs to the apolipoprotein A1/A4/E family. Homodimer. Interacts with APOA1BP and CLU. Component of a sperm activating protein complex (SPAP), consisting of APOA1, an immunoglobulin heavy chain, an immunoglobulin light chain and albumin. Interacts with NDRG1. Interacts with SCGB3A2. Interacts with NAXE and YJEFN3. In terms of processing, glycosylated. Palmitoylated. Post-translationally, phosphorylation sites are present in the extracellular medium.

Its subcellular location is the secreted. Functionally, participates in the reverse transport of cholesterol from tissues to the liver for excretion by promoting cholesterol efflux from tissues and by acting as a cofactor for the lecithin cholesterol acyltransferase (LCAT). As part of the SPAP complex, activates spermatozoa motility. This is Apolipoprotein A-I (APOA1) from Chinchilla lanigera (Long-tailed chinchilla).